The sequence spans 120 residues: Large ribosomal subunit protein bL17 (120 aa).

Belongs to the bacterial ribosomal protein bL17 family. In terms of assembly, part of the 50S ribosomal subunit. Contacts protein L32.

In Bacillus velezensis (strain DSM 23117 / BGSC 10A6 / LMG 26770 / FZB42) (Bacillus amyloliquefaciens subsp. plantarum), this protein is Large ribosomal subunit protein bL17.